The primary structure comprises 334 residues: MIEADRLIAPENPSFREEDVIDRAIRPKKLADYQGQDHVRDQMEIFIKAAQLRNEALDHLLIFGPPGLGKTTLANIVANEMEVNIRTTSGPVLEKAGDLAALLTNLEENDVLFIDEIHRLSPMVEEVLYPAMEDYQLDIMIGEGPAARSIKIDLPPFTLIGATTRAGSLTSPLRDRFGITQRLEYYKVKDLQDIVQRSADCLGLSMESEGALEVARRARGTPRIANRLLRRVRDYAEVKGNGHICADTADKALNMLDVDAEGFDYMDRKLLLAIMEKFGGGPVGLDNMAAAIGEEKDTIEDVLEPYLIQQGYLQRTPRGRIATDRAYLHFGIEK.

Residues alanine 4–tyrosine 186 are large ATPase domain (RuvB-L). ATP contacts are provided by residues isoleucine 25, arginine 26, glycine 67, lysine 70, threonine 71, threonine 72, glutamate 133–tyrosine 135, arginine 176, tyrosine 186, and arginine 223. A Mg(2+)-binding site is contributed by threonine 71. The interval lysine 187–aspartate 257 is small ATPAse domain (RuvB-S). The head domain (RuvB-H) stretch occupies residues alanine 260 to lysine 334. Arginine 315 and arginine 320 together coordinate DNA.

It belongs to the RuvB family. In terms of assembly, homohexamer. Forms an RuvA(8)-RuvB(12)-Holliday junction (HJ) complex. HJ DNA is sandwiched between 2 RuvA tetramers; dsDNA enters through RuvA and exits via RuvB. An RuvB hexamer assembles on each DNA strand where it exits the tetramer. Each RuvB hexamer is contacted by two RuvA subunits (via domain III) on 2 adjacent RuvB subunits; this complex drives branch migration. In the full resolvosome a probable DNA-RuvA(4)-RuvB(12)-RuvC(2) complex forms which resolves the HJ.

It is found in the cytoplasm. It carries out the reaction ATP + H2O = ADP + phosphate + H(+). Its function is as follows. The RuvA-RuvB-RuvC complex processes Holliday junction (HJ) DNA during genetic recombination and DNA repair, while the RuvA-RuvB complex plays an important role in the rescue of blocked DNA replication forks via replication fork reversal (RFR). RuvA specifically binds to HJ cruciform DNA, conferring on it an open structure. The RuvB hexamer acts as an ATP-dependent pump, pulling dsDNA into and through the RuvAB complex. RuvB forms 2 homohexamers on either side of HJ DNA bound by 1 or 2 RuvA tetramers; 4 subunits per hexamer contact DNA at a time. Coordinated motions by a converter formed by DNA-disengaged RuvB subunits stimulates ATP hydrolysis and nucleotide exchange. Immobilization of the converter enables RuvB to convert the ATP-contained energy into a lever motion, pulling 2 nucleotides of DNA out of the RuvA tetramer per ATP hydrolyzed, thus driving DNA branch migration. The RuvB motors rotate together with the DNA substrate, which together with the progressing nucleotide cycle form the mechanistic basis for DNA recombination by continuous HJ branch migration. Branch migration allows RuvC to scan DNA until it finds its consensus sequence, where it cleaves and resolves cruciform DNA. This is Holliday junction branch migration complex subunit RuvB from Vibrio campbellii (strain ATCC BAA-1116).